Consider the following 581-residue polypeptide: MTKPISLSNRALYARLLSYVRPYWKAVFLAVIGMVGTAATEPVFPAIMKYLLDNGFQAKDARMVWLIPMGIVTLFLVRSVIVYCTGYLMTWISSRLVTDLRRTMFAKLLALPTHHYDEHSAGQMISRLVYDVSNVTDAATSALITLVRESLTAIALIGYLLYLDWKLTLITLAIGPVIAFTVKSFSKRMRAASQKSLQAMRFISHTIEETISAQQVVKIFGGQERQQKQFFEATEQFRRAQMREAIPASAMTPITHIAASVAVAIIAFLALSQSTGQAGASAGSFISFITAMLMLISPVKQLATVNPTIQRGLAASESIFELLDAAQEDDRGKRQLLRSKGEICFDNVSLRYLGAERFALNDISFRITAGQTVALVGASGGGKSTISALIPRFYPVTSGRVLVDGIDINDITLASLRQNIALVSQNVILFNDTVGANIAYGSLQTCSRDDVIRAARAANAWDFIEQLPNGLDTPIGENGAKLSGGQRQRLAIARALLKDAPILILDEATSALDTESERQVQAALAVLMKNRTTLVIAHRLSTIEHADCILVLDQGRIVETGTHAELLRAGSYYANLSRLQG.

The next 5 helical transmembrane spans lie at 27–47 (VFLA…FPAI), 63–83 (MVWL…VIVY), 154–174 (IALI…TLAI), 251–271 (MTPI…FLAL), and 279–299 (GASA…ISPV). The region spanning 28–311 (FLAVIGMVGT…LATVNPTIQR (284 aa)) is the ABC transmembrane type-1 domain. In terms of domain architecture, ABC transporter spans 343–579 (ICFDNVSLRY…GSYYANLSRL (237 aa)). An ATP-binding site is contributed by 377–384 (GASGGGKS).

The protein belongs to the ABC transporter superfamily. Lipid exporter (TC 3.A.1.106) family. As to quaternary structure, homodimer.

It is found in the cell inner membrane. The enzyme catalyses ATP + H2O + lipid A-core oligosaccharideSide 1 = ADP + phosphate + lipid A-core oligosaccharideSide 2.. In terms of biological role, involved in lipopolysaccharide (LPS) biosynthesis. Translocates lipid A-core from the inner to the outer leaflet of the inner membrane. Transmembrane domains (TMD) form a pore in the inner membrane and the ATP-binding domain (NBD) is responsible for energy generation. The protein is ATP-dependent lipid A-core flippase of Albidiferax ferrireducens (strain ATCC BAA-621 / DSM 15236 / T118) (Rhodoferax ferrireducens).